The following is a 251-amino-acid chain: Coproheme decarboxylase (251 aa).

Fe-coproporphyrin III contacts are provided by residues R133, 147–151 (YPMSK), H174, Q187, and S225. The active site involves Y147.

It belongs to the ChdC family. Type 1 subfamily. Requires Fe-coproporphyrin III as cofactor.

The catalysed reaction is Fe-coproporphyrin III + 2 H2O2 + 2 H(+) = heme b + 2 CO2 + 4 H2O. The enzyme catalyses Fe-coproporphyrin III + H2O2 + H(+) = harderoheme III + CO2 + 2 H2O. It carries out the reaction harderoheme III + H2O2 + H(+) = heme b + CO2 + 2 H2O. The protein operates within porphyrin-containing compound metabolism; protoheme biosynthesis. Involved in coproporphyrin-dependent heme b biosynthesis. Catalyzes the decarboxylation of Fe-coproporphyrin III (coproheme) to heme b (protoheme IX), the last step of the pathway. The reaction occurs in a stepwise manner with a three-propionate intermediate. The chain is Coproheme decarboxylase from Listeria monocytogenes serotype 4b (strain CLIP80459).